A 249-amino-acid polypeptide reads, in one-letter code: ATP synthase subunit a, chloroplastic (249 aa).

5 helical membrane passes run 40–60, 97–117, 136–156, 201–221, and 222–242; these read QVLITSWVVIAILLGSAVLAI, VPFIGTLFLFIFVSNWSGALL, INTTVALALLTSAAYFYAGLS, LVVVVLVSLVPLVVPIPVMFL, and GLFTSGIQALIFATLAAAYIG.

Belongs to the ATPase A chain family. As to quaternary structure, F-type ATPases have 2 components, CF(1) - the catalytic core - and CF(0) - the membrane proton channel. CF(1) has five subunits: alpha(3), beta(3), gamma(1), delta(1), epsilon(1). CF(0) has four main subunits: a, b, b' and c.

The protein resides in the plastid. The protein localises to the chloroplast thylakoid membrane. Its function is as follows. Key component of the proton channel; it plays a direct role in the translocation of protons across the membrane. In Capsella bursa-pastoris (Shepherd's purse), this protein is ATP synthase subunit a, chloroplastic.